The sequence spans 242 residues: Protein HTATIP2 (242 aa).

Ala-2 is modified (N-acetylalanine). The interval 2 to 25 (ADKEALPKLREDFKMQNKSVFILG) is required for interaction with elongation factor EEF1A1. 12 residues coordinate NADPH: Ser-27, Gly-28, Glu-29, Thr-30, Arg-52, Arg-53, Leu-92, Gly-93, Tyr-143, Lys-147, Leu-170, and Arg-178. Tyr-143 acts as the Proton acceptor in catalysis. The active site involves Lys-147.

As to quaternary structure, monomer. Forms homodimers during oxidative stress. Interacts (via N-terminus) with elongation factor EEF1A1 (via middle-region); the interaction is direct and competes with EEF1A1 binding to guanyl-nucleotide exchange factor EEF1B2, thereby inhibiting GDP for GTP exchange and reactivation of EEF1A1. Interacts with nuclear transport receptors XPO4, IPO5/RANBP5, IPO7, IPO9 and KPNB1 as well as GCN1L1/GCN1 and LRPPRC probably through their HEAT repeats. Binds NCOA5/CIA.

Its subcellular location is the cytoplasm. Represses translation by preventing reactivation of elongation factor eEF1A. May also inhibit nuclear import by competing with nuclear import substrates for binding to a subset of nuclear transport receptors. Has additionally been proposed to act as a redox sensor involved in cellular oxidative stress surveillance. The polypeptide is Protein HTATIP2 (Mus musculus (Mouse)).